We begin with the raw amino-acid sequence, 482 residues long: Probable 2-carboxy-D-arabinitol-1-phosphatase (482 aa).

The N-terminal 34 residues, 1-34 (MISLPLTTPILPSRCLLHKTRRQNSTRRRLLIRS), are a transit peptide targeting the chloroplast. Residue His-55 is the Tele-phosphohistidine intermediate of the active site. Glu-129 serves as the catalytic Proton donor/acceptor.

This sequence belongs to the phosphoglycerate mutase family.

It localises to the plastid. The protein localises to the chloroplast stroma. The enzyme catalyses 2-carboxy-D-arabinitol 1-phosphate + H2O = 2-carboxy-D-arabinitol + phosphate. Its function is as follows. Phosphoglycerate mutase-like protein lacking PGM activity, but having 2-carboxy-D-arabinitol 1-phosphate (CA1P) phosphatase activity. Prevents the accumulation of D-glycero-2,3-pentodiulose-1,5-bisphosphate (PDBP) a potent inhibitor of ribulose-1,5-bisphosphate carboxylase (RuBisCO). PDBP is produced during the oxidation of ribulose-1,5-bisphosphate, the substrate of RuBisCO. This Arabidopsis thaliana (Mouse-ear cress) protein is Probable 2-carboxy-D-arabinitol-1-phosphatase.